A 140-amino-acid polypeptide reads, in one-letter code: L-fucose mutarotase (140 aa).

The active-site Proton donor is the His-22. Residues Asp-30, Arg-107, and 129 to 131 (YGN) contribute to the substrate site.

The protein belongs to the RbsD / FucU family. FucU mutarotase subfamily. Homodecamer.

It is found in the cytoplasm. The enzyme catalyses alpha-L-fucose = beta-L-fucose. The protein operates within carbohydrate metabolism; L-fucose metabolism. Functionally, involved in the anomeric conversion of L-fucose. The chain is L-fucose mutarotase from Citrobacter koseri (strain ATCC BAA-895 / CDC 4225-83 / SGSC4696).